A 1530-amino-acid polypeptide reads, in one-letter code: DNA-directed RNA polymerase III subunit RPC1 (1530 aa).

Zn(2+)-binding residues include C74, C77, C84, H87, C114, C117, and C161. Residues D503, D505, and D507 each coordinate Mg(2+). The tract at residues 846 to 858 (PTEFFFHTMAGRE) is bridging helix. Over residues 992-1001 (EEQESREDAL) the composition is skewed to basic and acidic residues. Disordered stretches follow at residues 992-1016 (EEQESREDALHNSNGKTNDRESRPR) and 1057-1099 (NLLN…SKEG).

The protein belongs to the RNA polymerase beta' chain family. As to quaternary structure, component of the RNA polymerase III (Pol III) complex consisting of 17 subunits.

It is found in the nucleus. The enzyme catalyses RNA(n) + a ribonucleoside 5'-triphosphate = RNA(n+1) + diphosphate. Functionally, DNA-dependent RNA polymerase catalyzes the transcription of DNA into RNA using the four ribonucleoside triphosphates as substrates. Largest and catalytic core component of RNA polymerase III which synthesizes small RNAs, such as 5S rRNA and tRNAs. Forms the polymerase active center together with the second largest subunit. A single-stranded DNA template strand of the promoter is positioned within the central active site cleft of Pol III. A bridging helix emanates from RPC1 and crosses the cleft near the catalytic site and is thought to promote translocation of Pol III by acting as a ratchet that moves the RNA-DNA hybrid through the active site by switching from straight to bent conformations at each step of nucleotide addition. The chain is DNA-directed RNA polymerase III subunit RPC1 from Trypanosoma brucei brucei.